We begin with the raw amino-acid sequence, 215 residues long: MKVILLGAPGAGKGTQAQFIMHKFGIPQISTGDMFRAAIKEGTELGKQAKALMDQGKLVPDDLTVALVKDRIAQPDCAHGFLLDGFPRTIPQADALKDAGVKIDLVLEFDVADEVIVERMSGRRVHQPSGRTYHIIYNPPKVAGQDDITGEELITRADDKAETVLERLAVYHQQTKPLIAYYIAEAEKGNTRYERLDGTKPVEQVSAELANIFNQ.

10–15 (GAGKGT) contacts ATP. Residues 30–59 (STGDMFRAAIKEGTELGKQAKALMDQGKLV) form an NMP region. Residues Thr-31, Arg-36, 57-59 (KLV), 85-88 (GFPR), and Gln-92 contribute to the AMP site. The tract at residues 122–159 (GRRVHQPSGRTYHIIYNPPKVAGQDDITGEELITRADD) is LID. ATP-binding positions include Arg-123 and 132–133 (TY). The AMP site is built by Arg-156 and Arg-167. Lys-200 contacts ATP.

Belongs to the adenylate kinase family. Monomer.

Its subcellular location is the cytoplasm. It catalyses the reaction AMP + ATP = 2 ADP. Its pathway is purine metabolism; AMP biosynthesis via salvage pathway; AMP from ADP: step 1/1. In terms of biological role, catalyzes the reversible transfer of the terminal phosphate group between ATP and AMP. Plays an important role in cellular energy homeostasis and in adenine nucleotide metabolism. The sequence is that of Adenylate kinase from Haemophilus ducreyi (strain 35000HP / ATCC 700724).